The sequence spans 184 residues: Large ribosomal subunit protein uL6 (184 aa).

The protein belongs to the universal ribosomal protein uL6 family. As to quaternary structure, part of the 50S ribosomal subunit.

Its function is as follows. This protein binds to the 23S rRNA, and is important in its secondary structure. It is located near the subunit interface in the base of the L7/L12 stalk, and near the tRNA binding site of the peptidyltransferase center. In Salinibacter ruber (strain DSM 13855 / M31), this protein is Large ribosomal subunit protein uL6.